A 1785-amino-acid chain; its full sequence is 1,3-beta-glucan synthase component FKS3 (1785 aa).

Transmembrane regions (helical) follow at residues 337–357, 375–395, 415–435, 444–464, 508–528, 547–567, 572–592, and 712–732; these read FWII…PTLY, LSVI…ATVF, IGLL…LGFF, AYIV…FFAV, LWVF…TLSL, YLLG…LMLL, LFFL…SIVL, and LATP…TVLV. Basic and acidic residues-rich tracts occupy residues 791-801 and 815-824; these read ESSHDEDRLEI and DHTESRKLPT. Residues 791 to 824 form a disordered region; that stretch reads ESSHDEDRLEIPDALYDPRSSPLSDHTESRKLPT. N-linked (GlcNAc...) asparagine glycosylation is found at N844, N874, N955, N1002, and N1170. 3 helical membrane passes run 1215–1235, 1268–1288, and 1303–1323; these read LFIS…GALN, VSIF…PLLI, and FLHH…QVYS. A glycan (N-linked (GlcNAc...) asparagine) is linked at N1360. Transmembrane regions (helical) follow at residues 1370-1390, 1394-1414, 1475-1495, 1514-1534, and 1549-1569; these read FFML…WFWI, SMCF…DFFI, FAEL…FSFI, LLVT…LFWV, and AGAV…LLDF. N-linked (GlcNAc...) asparagine glycosylation is present at N1579. A run of 3 helical transmembrane segments spans residues 1585–1605, 1655–1675, and 1713–1733; these read ILLI…TTIF, FFLG…PFID, and FSLY…PFFA. An N-linked (GlcNAc...) asparagine glycan is attached at N1761.

The protein belongs to the glycosyltransferase 48 family. In terms of processing, N-glycosylated.

It is found in the mitochondrion. Its subcellular location is the membrane. It carries out the reaction [(1-&gt;3)-beta-D-glucosyl](n) + UDP-alpha-D-glucose = [(1-&gt;3)-beta-D-glucosyl](n+1) + UDP + H(+). In terms of biological role, required for spore wall assembly. The chain is 1,3-beta-glucan synthase component FKS3 (FKS3) from Saccharomyces cerevisiae (strain ATCC 204508 / S288c) (Baker's yeast).